The following is a 145-amino-acid chain: MELFKSIVAVIGIIATIYFLIKKAETRTVLIGVGLIMSILTLNPMGALDAFAKSMTSGGLIMAICSSMGFAYVMKYTQCDTHLVHLLTKPLSGLKFFLIPIATIITFFINIAIPSAAGCAAAVGATLIPVLKSAGVRPATAGQLF.

Transmembrane regions (helical) follow at residues 1–21, 28–48, 54–74, and 96–116; these read MELFKSIVAVIGIIATIYFLI, TVLIGVGLIMSILTLNPMGAL, SMTSGGLIMAICSSMGFAYVM, and FFLIPIATIITFFINIAIPSA.

Belongs to the DcuC/DcuD transporter (TC 2.A.61) family.

It localises to the cell membrane. This is an uncharacterized protein from Haemophilus influenzae (strain ATCC 51907 / DSM 11121 / KW20 / Rd).